The sequence spans 360 residues: DNA replication and repair protein RecF (360 aa).

30–37 is a binding site for ATP; the sequence is GHNGSGKT.

It belongs to the RecF family.

Its subcellular location is the cytoplasm. Functionally, the RecF protein is involved in DNA metabolism; it is required for DNA replication and normal SOS inducibility. RecF binds preferentially to single-stranded, linear DNA. It also seems to bind ATP. The sequence is that of DNA replication and repair protein RecF from Actinobacillus pleuropneumoniae serotype 7 (strain AP76).